The chain runs to 545 residues: CTP synthase (545 aa).

The tract at residues 1 to 266 is amidoligase domain; sequence MATNYIFVTG…DTFVCDRFRL (266 aa). Ser14 lines the CTP pocket. Ser14 is a UTP binding site. Residues 15–20 and Asp72 each bind ATP; that span reads SLGKGI. Positions 72 and 140 each coordinate Mg(2+). Residues 147–149, 187–192, and Lys223 each bind CTP; these read DIE and KTKPTQ. UTP-binding positions include 187–192 and Lys223; that span reads KTKPTQ. 239-241 contributes to the ATP binding site; it reads KDV. A Glutamine amidotransferase type-1 domain is found at 291–542; the sequence is TIGMVGKYVE…VKAAKDYQDS (252 aa). Gly352 contributes to the L-glutamine binding site. The active-site Nucleophile; for glutamine hydrolysis is the Cys379. L-glutamine-binding positions include 380–383, Glu403, and Arg470; that span reads LGMQ. Active-site residues include His515 and Glu517.

Belongs to the CTP synthase family. In terms of assembly, homotetramer.

It carries out the reaction UTP + L-glutamine + ATP + H2O = CTP + L-glutamate + ADP + phosphate + 2 H(+). It catalyses the reaction L-glutamine + H2O = L-glutamate + NH4(+). The enzyme catalyses UTP + NH4(+) + ATP = CTP + ADP + phosphate + 2 H(+). It functions in the pathway pyrimidine metabolism; CTP biosynthesis via de novo pathway; CTP from UDP: step 2/2. With respect to regulation, allosterically activated by GTP, when glutamine is the substrate; GTP has no effect on the reaction when ammonia is the substrate. The allosteric effector GTP functions by stabilizing the protein conformation that binds the tetrahedral intermediate(s) formed during glutamine hydrolysis. Inhibited by the product CTP, via allosteric rather than competitive inhibition. Its function is as follows. Catalyzes the ATP-dependent amination of UTP to CTP with either L-glutamine or ammonia as the source of nitrogen. Regulates intracellular CTP levels through interactions with the four ribonucleotide triphosphates. The sequence is that of CTP synthase from Actinobacillus pleuropneumoniae serotype 7 (strain AP76).